We begin with the raw amino-acid sequence, 946 residues long: Calcium-transporting ATPase type 2C member 2 (946 aa).

Residues 1 to 106 lie on the Cytoplasmic side of the membrane; the sequence is MVEGRVSEFL…DNSEPVWKKY (106 aa). The interval 71–95 is interaction with ORAI1; the sequence is VDLHTGLSEFSVTQRRLAHGWNEFV. A helical transmembrane segment spans residues 107-127; sequence LDQFKNPLILLLLGSALVSVL. The Extracellular segment spans residues 128–129; sequence TK. The chain crosses the membrane as a helical span at residues 130–150; sequence EYEDAVSIATAVLVVVTVAFI. The Cytoplasmic portion of the chain corresponds to 151–231; the sequence is QEYRSEKSLE…EAEPCSKTDS (81 aa). A helical transmembrane segment spans residues 232-252; that stretch reads PLTGGGDLTTLSNIVFMGTLV. Over 253–293 the chain is Extracellular; the sequence is QYGRGQGVVIGTGESSQFGEVFKMMQAEETPKTPLQKSMDR. The residue at position 264 (Thr264) is a Phosphothreonine. Phosphoserine occurs at positions 267 and 268. A helical membrane pass occupies residues 294–314; the sequence is LGKQLTLFSFGIIGLIMLIGW. Residues 315–331 lie on the Cytoplasmic side of the membrane; that stretch reads SQGKQLLSMFTIGVSLA. Positions 332, 333, 335, and 337 each coordinate Ca(2+). The helical transmembrane segment at 332 to 352 threads the bilayer; that stretch reads VAAIPEGLPIVVMVTLVLGVL. The Extracellular portion of the chain corresponds to 353 to 750; the sequence is RMAKKRVIVK…ISALSLITLS (398 aa). Asp379 acts as the 4-aspartylphosphate intermediate in catalysis. Positions 674 and 678 each coordinate Mg(2+). A helical membrane pass occupies residues 751 to 771; it reads TVFNLPSPLNAMQILWINIIM. Residues Asn768 and Asp772 each coordinate Ca(2+). Topologically, residues 772-804 are cytoplasmic; it reads DGPPAQSLGVEPVDKDAFRQPPRSVRDTILSRA. The chain crosses the membrane as a helical span at residues 805–825; sequence LILKILMSAAIIISGTLFIFW. Topologically, residues 826–837 are extracellular; it reads KEMPEDRASTPR. A helical transmembrane segment spans residues 838–855; sequence TTTMTFTCFVFFDLFNAL. The Cytoplasmic portion of the chain corresponds to 856–874; sequence TCRSQTKLIFEIGFLRNHM. Residues 875-895 form a helical membrane-spanning segment; it reads FLYSVLGSILGQLAVIYIPPL. Residues 896–905 are Extracellular-facing; it reads QRVFQTENLG. A helical membrane pass occupies residues 906-926; it reads ALDLLFLTGLASSVFILSELL. The Cytoplasmic segment spans residues 927 to 946; sequence KLCEKYCCSPKRVQMHPEDV.

The protein belongs to the cation transport ATPase (P-type) (TC 3.A.3) family. Type IIA subfamily. As to quaternary structure, interacts (via N-terminus) with ORAI1 (via N- and C-termini); this interaction regulates Ca(2+) influx at the plasma membrane. As to expression, highly expressed in the gastrointestinal and respiratory tracts, prostate, thyroid, salivary, and mammary glands. Expressed in colon epithelial cells (at protein level). Expressed in brain and testis (at protein level).

It localises to the golgi apparatus. The protein resides in the trans-Golgi network membrane. The protein localises to the cell membrane. It is found in the basolateral cell membrane. It carries out the reaction Ca(2+)(in) + ATP + H2O = Ca(2+)(out) + ADP + phosphate + H(+). The enzyme catalyses Mn(2+)(in) + ATP + H2O = Mn(2+)(out) + ADP + phosphate + H(+). Functionally, ATP-driven pump that supplies the Golgi apparatus with Ca(2+) and Mn(2+) ions, both essential cofactors for processing and trafficking of newly synthesized proteins in the secretory pathway. Within a catalytic cycle, acquires Ca(2+) or Mn(2+) ions on the cytoplasmic side of the membrane and delivers them to the lumenal side. The transfer of ions across the membrane is coupled to ATP hydrolysis and is associated with a transient phosphorylation that shifts the pump conformation from inward-facing to outward-facing state. Induces Ca(2+) influx independently of its ATP-driven pump function. At the basolateral membrane of mammary epithelial cells, interacts with Ca(2+) channel ORAI1 and mediates Ca(2+) entry independently of the Ca(2+) content of endoplasmic reticulum or Golgi stores. May facilitate transepithelial transport of large quantities of Ca(2+) for milk secretion via activation of Ca(2+) influx channels at the plasma membrane and active Ca(2+) transport at the Golgi apparatus. The sequence is that of Calcium-transporting ATPase type 2C member 2 from Homo sapiens (Human).